The primary structure comprises 378 residues: MQSAIKSVEYDRPLAAGAACGVGEAWAKVPDALAPDERDALKARIKALLVREKAVLVAHYYVDADLQALADETGGCVADSLEMARFGRDHDAHTLVVAGVRFMGETAKILSPGKRVLMPDLDATCSLDLGCPVDEFSQFCDAHPERTVVVYANTSAAVKARADWMVTSSIGLEIVADLHARGEKIIWAPDRHLGGYIQKKTGADMLMWQGSCLVHDEFKGIELDLLRHEYPDAKILVHPESPEGVVALADVVGSTTQLIDAAVKLDAQRFIVATDLGILHKMRLAAPGKTFIEAPTAGNSATCKSCAHCPWMAMNALSNLADVLERGHNEIFVEAAIAQRARMPIDRMLDFAARHKQRVQASGDLQRDQALFANVGAA.

2 residues coordinate iminosuccinate: H59 and S80. [4Fe-4S] cluster is bound at residue C125. Iminosuccinate is bound by residues 151–153 (YAN) and S168. C212 provides a ligand contact to [4Fe-4S] cluster. Residues 238 to 240 (HPE) and T255 contribute to the iminosuccinate site. C309 provides a ligand contact to [4Fe-4S] cluster.

The protein belongs to the quinolinate synthase family. Type 1 subfamily. It depends on [4Fe-4S] cluster as a cofactor.

It localises to the cytoplasm. It catalyses the reaction iminosuccinate + dihydroxyacetone phosphate = quinolinate + phosphate + 2 H2O + H(+). It functions in the pathway cofactor biosynthesis; NAD(+) biosynthesis; quinolinate from iminoaspartate: step 1/1. Catalyzes the condensation of iminoaspartate with dihydroxyacetone phosphate to form quinolinate. The chain is Quinolinate synthase from Burkholderia mallei (strain NCTC 10247).